The following is a 557-amino-acid chain: 2-isopropylmalate synthase (557 aa).

A Pyruvate carboxyltransferase domain is found at 33–307 (PIWCSSDLRD…DPQLDFSDID (275 aa)). Residues Asp-42, His-246, His-248, and Asn-282 each contribute to the Mg(2+) site. The regulatory domain stretch occupies residues 439–557 (ANAPYALVSH…SLSQQEAKAA (119 aa)).

The protein belongs to the alpha-IPM synthase/homocitrate synthase family. LeuA type 2 subfamily. Homodimer. The cofactor is Mg(2+).

It localises to the cytoplasm. It catalyses the reaction 3-methyl-2-oxobutanoate + acetyl-CoA + H2O = (2S)-2-isopropylmalate + CoA + H(+). It participates in amino-acid biosynthesis; L-leucine biosynthesis; L-leucine from 3-methyl-2-oxobutanoate: step 1/4. Catalyzes the condensation of the acetyl group of acetyl-CoA with 3-methyl-2-oxobutanoate (2-ketoisovalerate) to form 3-carboxy-3-hydroxy-4-methylpentanoate (2-isopropylmalate). The protein is 2-isopropylmalate synthase of Pseudomonas putida (strain GB-1).